A 591-amino-acid polypeptide reads, in one-letter code: Proteasome-associated ATPase (591 aa).

The stretch at 8–77 (DSVAAARELE…LREEVDRLGQ (70 aa)) forms a coiled coil. 278–283 (GCGKTL) contacts ATP. The interval 590-591 (YL) is docks into pockets in the proteasome alpha-ring.

This sequence belongs to the AAA ATPase family. In terms of assembly, homohexamer. Assembles into a hexameric ring structure that caps the 20S proteasome core. Strongly interacts with the prokaryotic ubiquitin-like protein Pup through a hydrophobic interface; the interacting region of ARC lies in its N-terminal coiled-coil domain. There is one Pup binding site per ARC hexamer ring. Upon ATP-binding, the C-terminus of ARC interacts with the alpha-rings of the proteasome core, possibly by binding to the intersubunit pockets.

It participates in protein degradation; proteasomal Pup-dependent pathway. ATPase which is responsible for recognizing, binding, unfolding and translocation of pupylated proteins into the bacterial 20S proteasome core particle. May be essential for opening the gate of the 20S proteasome via an interaction with its C-terminus, thereby allowing substrate entry and access to the site of proteolysis. Thus, the C-termini of the proteasomal ATPase may function like a 'key in a lock' to induce gate opening and therefore regulate proteolysis. The polypeptide is Proteasome-associated ATPase (Rhodococcus jostii (strain RHA1)).